The chain runs to 133 residues: Small ribosomal subunit protein uS9 (133 aa).

The segment covering 97–113 (SKQELKSHGFLTRDPRK) has biased composition (basic and acidic residues). Residues 97 to 133 (SKQELKSHGFLTRDPRKKERKKYGHKKARKSFQFSKR) form a disordered region. Over residues 114–133 (KERKKYGHKKARKSFQFSKR) the composition is skewed to basic residues.

Belongs to the universal ribosomal protein uS9 family.

This chain is Small ribosomal subunit protein uS9, found in Chlamydia abortus (strain DSM 27085 / S26/3) (Chlamydophila abortus).